Reading from the N-terminus, the 395-residue chain is Polar tube protein 1 (395 aa).

An N-terminal signal peptide occupies residues 1 to 22 (MKGISKILSASIALMKLENVYS). Disordered stretches follow at residues 59–95 (CASGSQDTYSPSPAAPTSPVTPGKTSENETSPSAPAE) and 111–133 (PGTTSGTTPGSGPCETPEQQQPL). Residues 68–80 (SPSPAAPTSPVTP) are compositionally biased toward low complexity. Residues 81 to 91 (GKTSENETSPS) are compositionally biased toward polar residues. N-linked (GlcNAc...) asparagine glycosylation occurs at asparagine 86. The span at 111–128 (PGTTSGTTPGSGPCETPE) shows a compositional bias: low complexity. Residue asparagine 173 is glycosylated (N-linked (GlcNAc...) asparagine). 4 consecutive repeat copies span residues 179-204 (PGQQQILSGTLPPGATLCQGQAMPST), 205-230 (PGQQQILSGTLPPGVTLCQGQATPST), 231-256 (PGQQQVLSGTLPPGVTLCQGQATPST), and 257-282 (PGQQQVLSGTLLPGATLCQDQGMPGT). Residues 179 to 282 (PGQQQILSGT…LCQDQGMPGT (104 aa)) form a 4 X 26 AA approximate tandem repeats region. Residues 277 to 300 (QGMPGTSGVPGQQGQSSGQCCAPQ) are disordered. A compositionally biased stretch (low complexity) spans 280–300 (PGTSGVPGQQGQSSGQCCAPQ). Residue asparagine 311 is glycosylated (N-linked (GlcNAc...) asparagine).

As to quaternary structure, interacts with PTP2 and PTP3.

It localises to the spore polar tube. In terms of biological role, involved with PTP2 and PTP3 in the formation of the polar tube through which the infectious agent is passed on to the host cell. Accounts for at least 70 percent of the mass of the polar tube. In Encephalitozoon cuniculi (strain GB-M1) (Microsporidian parasite), this protein is Polar tube protein 1 (PTP1).